The following is a 506-amino-acid chain: Cysteine protease 1 (506 aa).

Positions 1-21 (MTSSRPSGRDSTGWQETVSNT) are disordered. Residue C226 is the Nucleophile of the active site. Active-site residues include D399 and H401.

Belongs to the peptidase C54 family.

The protein localises to the cytoplasm. It is found in the nucleus. Its subcellular location is the preautophagosomal structure. The enzyme catalyses [protein]-C-terminal L-amino acid-glycyl-phosphatidylethanolamide + H2O = [protein]-C-terminal L-amino acid-glycine + a 1,2-diacyl-sn-glycero-3-phosphoethanolamine. Its function is as follows. Cysteine protease that plays a key role in cytoplasm to vacuole transport (Cvt) and autophagy by mediating both proteolytic activation and delipidation of ATG8. Required for selective autophagic degradation of the nucleus (nucleophagy) as well as for mitophagy which contributes to regulate mitochondrial quantity and quality by eliminating the mitochondria to a basal level to fulfill cellular energy requirements and preventing excess ROS production. The protease activity is required for proteolytic activation of ATG8: cleaves the C-terminal amino acid of ATG8 to reveal a C-terminal glycine. ATG8 ubiquitin-like activity requires the exposure of the glycine at the C-terminus for its conjugation to phosphatidylethanolamine (PE) and its insertion to membranes, which is necessary for autophagy. The ATG8-PE conjugate mediates tethering between adjacent membranes and stimulates membrane hemifusion, leading to expansion of the autophagosomal membrane during autophagy. In addition to the protease activity, also catalyzes deconjugation of PE-conjugated forms of ATG8 during macroautophagy: ATG8 delipidation is required to release the protein from membranes, which facilitates multiple events during macroautophagy, and especially for efficient autophagosome biogenesis, the assembly of ATG9-containing tubulovesicular clusters into phagophores/autophagosomes, and for the disassembly of PAS-associated ATG components. ATG8 delipidation by ATG4 also recycles ATG8-PE generated on inappropriate membranes to maintain a reservoir of unlipidated ATG8 that is required for autophagosome formation at the PAS. The protein is Cysteine protease 1 (cpr-1) of Neurospora crassa (strain ATCC 24698 / 74-OR23-1A / CBS 708.71 / DSM 1257 / FGSC 987).